The primary structure comprises 118 residues: Large ribosomal subunit protein uL18 (118 aa).

This sequence belongs to the universal ribosomal protein uL18 family. As to quaternary structure, part of the 50S ribosomal subunit; part of the 5S rRNA/L5/L18/L25 subcomplex. Contacts the 5S and 23S rRNAs.

In terms of biological role, this is one of the proteins that bind and probably mediate the attachment of the 5S RNA into the large ribosomal subunit, where it forms part of the central protuberance. This Nitrosospira multiformis (strain ATCC 25196 / NCIMB 11849 / C 71) protein is Large ribosomal subunit protein uL18.